We begin with the raw amino-acid sequence, 473 residues long: Crt homolog 1 (473 aa).

The Cytoplasmic segment spans residues 1-49; sequence MTNNDKEKQPLLSSINNEDDNGATINIVEPVPWYSNIPQKIKNSMSKET. A helical membrane pass occupies residues 50 to 70; sequence ITILIYVVLYVTSGVINSVLL. At 71–80 the chain is on the vacuolar side; sequence KKVMNKFTNY. Residues 81-101 traverse the membrane as a helical segment; sequence AFFLSQLTNFGYVPIFGAVTA. At 102 to 121 the chain is on the cytoplasmic side; the sequence is YKIFFTKDIPQETRDFPTRK. Residues 122–142 traverse the membrane as a helical segment; sequence FAIMGALDAITGFFVVIGGVS. Topologically, residues 143-146 are vacuolar; the sequence is TSGP. A helical membrane pass occupies residues 147 to 167; it reads LQQLLNQAIIPFTMIASFIFL. Topologically, residues 168 to 175 are cytoplasmic; sequence KERYSLIQ. The chain crosses the membrane as a helical span at residues 176 to 196; it reads LGGALVIIGGVVTSLIPSLLG. Topologically, residues 197–207 are vacuolar; the sequence is GSSGGNKPFWN. Residues 208 to 228 form a helical membrane-spanning segment; it reads FFYLLSVIPGALSNVYKDIGF. Residues 229–248 are Cytoplasmic-facing; the sequence is QAVADMDVWYLQYWDSLYQS. The chain crosses the membrane as a helical span at residues 249 to 269; sequence IFGLFLFPVNNWLPPPATVKF. Over 270–322 the chain is Vacuolar; sequence EQILPFMKEGAECLAGINSIIPSYINGTSSFTATSCTYAPDATITCDDCHNAW. Asn295 is a glycosylation site (N-linked (GlcNAc...) asparagine). A helical membrane pass occupies residues 323-343; sequence IVIILYMTINIIYNIFILLVL. The Cytoplasmic segment spans residues 344-352; that stretch reads KHAGATVYS. The helical transmembrane segment at 353-373 threads the bilayer; the sequence is IANTLRLPLTNIVFSIHFIMG. Ser374 is a topological domain (vacuolar). A helical transmembrane segment spans residues 375–395; it reads AVSPFSGLSVAGLVIILVGLG. Residues 396-473 lie on the Cytoplasmic side of the membrane; the sequence is GYRVGSMIKQ…AANNNNYGDA (78 aa).

Belongs to the CRT-like transporter family.

The protein localises to the vacuole membrane. Nutrient transporter. Involved in maintaining the osmotic homeostasis of the digestive vacuole. This Dictyostelium discoideum (Social amoeba) protein is Crt homolog 1 (crtp1).